The following is a 200-amino-acid chain: Ribonuclease HII (200 aa).

The RNase H type-2 domain occupies 14–200 (SRLAGVDEVG…FAPVKQWQLL (187 aa)). Residues aspartate 20, glutamate 21, and aspartate 112 each coordinate a divalent metal cation.

It belongs to the RNase HII family. The cofactor is Mn(2+). Mg(2+) is required as a cofactor.

It localises to the cytoplasm. It carries out the reaction Endonucleolytic cleavage to 5'-phosphomonoester.. Endonuclease that specifically degrades the RNA of RNA-DNA hybrids. This Chromohalobacter salexigens (strain ATCC BAA-138 / DSM 3043 / CIP 106854 / NCIMB 13768 / 1H11) protein is Ribonuclease HII.